The primary structure comprises 402 residues: Secondary metabolism regulator laeA (402 aa).

The disordered stretch occupies residues 1 to 70; the sequence is MSLKYYLNDL…MSPTEVCSTD (70 aa). Residues 11-21 show a composition bias toward acidic residues; that stretch reads SDSDSESESEC.

It belongs to the methyltransferase superfamily. LaeA methyltransferase family.

The protein resides in the nucleus. The catalysed reaction is L-methionyl-[protein] + S-adenosyl-L-methionine = S-methyl-L-methionyl-[protein] + S-adenosyl-L-homocysteine. Methyltransferase that performs automethylation. No other methyl-accepting substrate has been identified yet. Acts as a global regulator for secondary metabolite gene expression. Negatively regulates the production of coprinoferrin, a structurally novel acylated tripeptide hydroxamate siderophore. This chain is Secondary metabolism regulator laeA, found in Coprinopsis cinerea (strain Okayama-7 / 130 / ATCC MYA-4618 / FGSC 9003) (Inky cap fungus).